The following is a 160-amino-acid chain: Cytochrome c-type biogenesis protein CcmE (160 aa).

Over 1–7 (MTRKQRR) the chain is Cytoplasmic. Residues 8 to 28 (LFMIFGALGTLGVAVGLILFA) form a helical; Signal-anchor for type II membrane protein membrane-spanning segment. The Periplasmic portion of the chain corresponds to 29-160 (LSDNIVFFYG…TQGAAAPLIR (132 aa)). Heme contacts are provided by His122 and Tyr126. The tract at residues 140–160 (VWQEDGQAKPATQGAAAPLIR) is disordered.

The protein belongs to the CcmE/CycJ family.

Its subcellular location is the cell inner membrane. In terms of biological role, heme chaperone required for the biogenesis of c-type cytochromes. Transiently binds heme delivered by CcmC and transfers the heme to apo-cytochromes in a process facilitated by CcmF and CcmH. This Beijerinckia indica subsp. indica (strain ATCC 9039 / DSM 1715 / NCIMB 8712) protein is Cytochrome c-type biogenesis protein CcmE.